The primary structure comprises 61 residues: uncharacterized protein (61 aa).

This is an uncharacterized protein from Fowlpox virus (strain NVSL) (FPV).